The following is a 352-amino-acid chain: C-C chemokine receptor type 5 (352 aa).

Residues 1 to 30 (MDYQVSSPIYDIDYGPSEPCRKIDVKQMGA) lie on the Extracellular side of the membrane. Residue Y3 is modified to Sulfotyrosine. O-linked (GalNAc...) serine glycosylation is found at S6 and S7. A sulfotyrosine mark is found at Y10 and Y14. 2 disulfides stabilise this stretch: C20-C269 and C101-C178. Residues 31-58 (HLLPPLYSMVFLFGFVGNMLVVLILINC) traverse the membrane as a helical segment. Residues 59 to 68 (KRLKSMTDIY) are Cytoplasmic-facing. The chain crosses the membrane as a helical span at residues 69 to 89 (LLNLAISDLIFLFTVPFWAHY). The Extracellular segment spans residues 90 to 102 (AAGQWDFGNTMCQ). The helical transmembrane segment at 103–124 (FLTGLYFIGFFSGIFFIILLTI) threads the bilayer. Residues 125-141 (DRYLAIVHAVFALKART) are Cytoplasmic-facing. The chain crosses the membrane as a helical span at residues 142-166 (VTFGVVTSVITWVVAVFASLPGIIF). Residues 167-198 (TRSQKEGYHYTCSPHFPFSQYQFWKNFETLKM) lie on the Extracellular side of the membrane. A helical membrane pass occupies residues 199-218 (VILGLVLPLLVMVICYSGIL). At 219–235 (KTLLRCRNEKKRHRAVR) the chain is on the cytoplasmic side. A helical membrane pass occupies residues 236-260 (LIFTIMIVYFLFWAPYNIVLLLNTY). Residues 261–277 (QEFFGLNNCSSSNRLDQ) lie on the Extracellular side of the membrane. Residues 278–301 (AMQVTETLGMTHCCVNPIIYAFVG) traverse the membrane as a helical segment. The Cytoplasmic portion of the chain corresponds to 302–352 (EKFRNYLKVFFQKHIAKCFCECCSIFQKEAPERANSVYTRSTGEQEISVGL). 3 S-palmitoyl cysteine lipidation sites follow: C321, C323, and C324. Phosphoserine; by BARK1 occurs at positions 337, 342, and 349.

The protein belongs to the G-protein coupled receptor 1 family. As to quaternary structure, interacts with PRAF2. Efficient ligand binding to CCL3/MIP-1alpha and CCL4/MIP-1beta requires sulfation, O-glycosylation and sialic acid modifications. Glycosylation on Ser-6 is required for efficient binding of CCL4. Interacts with GRK2. Interacts with ARRB1 and ARRB2. Interacts with CNIH4. Interacts with S100A4; this interaction stimulates T-lymphocyte chemotaxis. In terms of processing, sulfated on at least 2 of the N-terminal tyrosines. Sulfation is required for efficient binding of the chemokines, CCL3 and CCL4. Palmitoylation in the C-terminal is important for cell surface expression. Post-translationally, phosphorylation on serine residues in the C-terminal is stimulated by binding CC chemokines especially by APO-RANTES. In terms of processing, O-glycosylated, but not N-glycosylated. Ser-6 appears to be the major site even if Ser-7 may be also O-glycosylated. Also sialylated glycans present which contribute to chemokine binding. Ser-17 may also be glycosylated and, if so, with small moieties such as a T-antigen.

It is found in the cell membrane. Its function is as follows. Receptor for a number of inflammatory CC-chemokines including CCL3/MIP-1-alpha, CCL4/MIP-1-beta and RANTES and subsequently transduces a signal by increasing the intracellular calcium ion level. May play a role in the control of granulocytic lineage proliferation or differentiation. Participates in T-lymphocyte migration to the infection site by acting as a chemotactic receptor. This Mico humeralifer (Black and white tassel-ear marmoset) protein is C-C chemokine receptor type 5 (CCR5).